A 433-amino-acid chain; its full sequence is ATP-dependent protease ATPase subunit HslU (433 aa).

Residues V18, 60-65, D246, E311, and R383 each bind ATP; that span reads GVGKTE.

This sequence belongs to the ClpX chaperone family. HslU subfamily. A double ring-shaped homohexamer of HslV is capped on each side by a ring-shaped HslU homohexamer. The assembly of the HslU/HslV complex is dependent on binding of ATP.

It is found in the cytoplasm. In terms of biological role, ATPase subunit of a proteasome-like degradation complex; this subunit has chaperone activity. The binding of ATP and its subsequent hydrolysis by HslU are essential for unfolding of protein substrates subsequently hydrolyzed by HslV. HslU recognizes the N-terminal part of its protein substrates and unfolds these before they are guided to HslV for hydrolysis. This chain is ATP-dependent protease ATPase subunit HslU, found in Rhodopseudomonas palustris (strain BisB5).